Here is a 218-residue protein sequence, read N- to C-terminus: Protein N-lysine methyltransferase METTL21A (218 aa).

Residues Trp47, 73–75, Asp94, Trp125, and Ala143 contribute to the S-adenosyl-L-methionine site; that span reads GAG.

The protein belongs to the methyltransferase superfamily. METTL21 family.

It localises to the cytoplasm. It catalyses the reaction L-lysyl-[protein] + 3 S-adenosyl-L-methionine = N(6),N(6),N(6)-trimethyl-L-lysyl-[protein] + 3 S-adenosyl-L-homocysteine + 3 H(+). Its function is as follows. Protein-lysine methyltransferase that selectively trimethylates residues in heat shock protein 70 (HSP70) family members. The polypeptide is Protein N-lysine methyltransferase METTL21A (mettl21a) (Danio rerio (Zebrafish)).